A 275-amino-acid polypeptide reads, in one-letter code: Formamidopyrimidine-DNA glycosylase (275 aa).

Pro2 acts as the Schiff-base intermediate with DNA in catalysis. Glu3 acts as the Proton donor in catalysis. The active-site Proton donor; for beta-elimination activity is Lys58. DNA contacts are provided by His91, Arg109, and Lys154. The FPG-type zinc finger occupies 240-274 (AVYERAGLACRVCGTPIRRLVQGQRATYFCPHCQK). The active-site Proton donor; for delta-elimination activity is the Arg264.

This sequence belongs to the FPG family. In terms of assembly, monomer. It depends on Zn(2+) as a cofactor.

It catalyses the reaction Hydrolysis of DNA containing ring-opened 7-methylguanine residues, releasing 2,6-diamino-4-hydroxy-5-(N-methyl)formamidopyrimidine.. The enzyme catalyses 2'-deoxyribonucleotide-(2'-deoxyribose 5'-phosphate)-2'-deoxyribonucleotide-DNA = a 3'-end 2'-deoxyribonucleotide-(2,3-dehydro-2,3-deoxyribose 5'-phosphate)-DNA + a 5'-end 5'-phospho-2'-deoxyribonucleoside-DNA + H(+). Its function is as follows. Involved in base excision repair of DNA damaged by oxidation or by mutagenic agents. Acts as a DNA glycosylase that recognizes and removes damaged bases. Has a preference for oxidized purines, such as 7,8-dihydro-8-oxoguanine (8-oxoG). Has AP (apurinic/apyrimidinic) lyase activity and introduces nicks in the DNA strand. Cleaves the DNA backbone by beta-delta elimination to generate a single-strand break at the site of the removed base with both 3'- and 5'-phosphates. The polypeptide is Formamidopyrimidine-DNA glycosylase (Bordetella avium (strain 197N)).